We begin with the raw amino-acid sequence, 347 residues long: MLENGSHFFEGVEKLLEIWFEESSNGDDDLRNISRSDWENVLSNVNCQIISTSKNDIIDAFVLSESSMFVSKRRWILKTCGTTTPLKCLGQLLKLAEANGYNVVADLFYSRKNFTRPEAQITPHQGFTEEVTYLDSIFPNGRSYCLGSMNLECWYLYTFSRSDIKITPQLISDEKNVDSDPDQTIEILMQDLDPETMSIFYKNKFNDANGATVKSGIDTILPTMHIDDFLFDPCGYSMNGINDKGEYMTIHITPENQFSYVSFETNVALSNYRKLINQVINTFKPGKFIVTIFANKCSLAYETMKELEVEYSQGSHWKRTDMQCCNFPSYNLLFAQYSHSEKTGDYL.

Active-site residues include E10 and E13. S66 acts as the Schiff-base intermediate with substrate; via pyruvic acid in catalysis. A Pyruvic acid (Ser); by autocatalysis modification is found at S66. Residue C80 is the Proton donor; for catalytic activity of the active site. Residues S237 and H251 each act as proton acceptor; for processing activity in the active site.

Belongs to the eukaryotic AdoMetDC family. Pyruvate serves as cofactor. Post-translationally, is synthesized initially as an inactive proenzyme. Formation of the active enzyme involves a self-maturation process in which the active site pyruvoyl group is generated from an internal serine residue via an autocatalytic post-translational modification. Two non-identical subunits are generated from the proenzyme in this reaction, and the pyruvate is formed at the N-terminus of the alpha chain, which is derived from the carboxyl end of the proenzyme. The post-translation cleavage follows an unusual pathway, termed non-hydrolytic serinolysis, in which the side chain hydroxyl group of the serine supplies its oxygen atom to form the C-terminus of the beta chain, while the remainder of the serine residue undergoes an oxidative deamination to produce ammonia and the pyruvoyl group blocking the N-terminus of the alpha chain.

The enzyme catalyses S-adenosyl-L-methionine + H(+) = S-adenosyl 3-(methylsulfanyl)propylamine + CO2. It participates in amine and polyamine biosynthesis; S-adenosylmethioninamine biosynthesis; S-adenosylmethioninamine from S-adenosyl-L-methionine: step 1/1. This Drosophila melanogaster (Fruit fly) protein is S-adenosylmethionine decarboxylase proenzyme (SamDC).